A 500-amino-acid chain; its full sequence is Lariat debranching enzyme (500 aa).

A disordered region spans residues 1 to 25 (MSSKNPVDEQPCCGSHEGSHQDPAP). A divalent metal cation is bound by residues C48, H50, D79, and N124. A lariat recognition loop region spans residues 164-194 (SGIFSQGDFQFSHYERPSFSERDVKSAYHVR). Residues H222, H274, and H276 each coordinate a divalent metal cation. A disordered region spans residues 453–500 (DDANAKPNQDDVDFGDEDFVIDRGHTSDEPEAKKSRLDEDKFEAVPSE). Residues 462–471 (DDVDFGDEDF) are compositionally biased toward acidic residues. Positions 472–500 (VIDRGHTSDEPEAKKSRLDEDKFEAVPSE) are enriched in basic and acidic residues.

This sequence belongs to the lariat debranching enzyme family. Fe(2+) is required as a cofactor. Requires Zn(2+) as cofactor. Mn(2+) serves as cofactor.

The protein localises to the nucleus. Active in presence of diverse metals including Fe(2+), Zn(2+), Mn(2+). Binds two metal cations in two adjacent alpha and beta metal-binding pockets. Cleaves the 2'-5' phosphodiester linkage at the branch point of lariat intron pre-mRNAs after splicing and converts them into linear molecules that are subsequently degraded. It thereby facilitates ribonucleotide turnover. The sequence is that of Lariat debranching enzyme from Caenorhabditis elegans.